Reading from the N-terminus, the 217-residue chain is Ribonuclease HII (217 aa).

The RNase H type-2 domain occupies 34–217 (WPVAGTDEAG…RMSFRPLKRD (184 aa)). A divalent metal cation-binding residues include Asp-40, Glu-41, and Asp-131.

Belongs to the RNase HII family. Mn(2+) is required as a cofactor. It depends on Mg(2+) as a cofactor.

Its subcellular location is the cytoplasm. It catalyses the reaction Endonucleolytic cleavage to 5'-phosphomonoester.. Endonuclease that specifically degrades the RNA of RNA-DNA hybrids. The chain is Ribonuclease HII from Agrobacterium fabrum (strain C58 / ATCC 33970) (Agrobacterium tumefaciens (strain C58)).